A 299-amino-acid chain; its full sequence is Muscleblind-like protein (299 aa).

2 consecutive C3H1-type zinc fingers follow at residues 38–66 (WLQV…HPPP) and 72–100 (QGRV…HPPQ).

The protein belongs to the muscleblind family.

The protein resides in the nucleus. In terms of biological role, binds to RNA with repeat sequences CUG and CCUG. This is Muscleblind-like protein from Caenorhabditis briggsae.